The sequence spans 57 residues: uncharacterized protein (57 aa).

The next 2 helical transmembrane spans lie at Leu2–Val22 and Gly29–Ile49.

The protein localises to the cell membrane. This is an uncharacterized protein from Bacillus subtilis (strain 168).